The sequence spans 785 residues: E3 UFM1-protein ligase 1 homolog (785 aa).

The disordered stretch occupies residues N404 to T482.

Belongs to the UFL1 family.

Its function is as follows. E3 UFM1-protein ligase that mediates ufmylation of target proteins. This Drosophila persimilis (Fruit fly) protein is E3 UFM1-protein ligase 1 homolog.